Reading from the N-terminus, the 758-residue chain is 5-methyltetrahydropteroyltriglutamate--homocysteine methyltransferase (758 aa).

Residues 16 to 19 and Lys-112 each bind 5-methyltetrahydropteroyltri-L-glutamate; that span reads RELK. L-homocysteine-binding positions include 433–435 and Glu-486; that span reads IGS. Residues 433-435 and Glu-486 contribute to the L-methionine site; that span reads IGS. Residues 517 to 518 and Trp-563 each bind 5-methyltetrahydropteroyltri-L-glutamate; that span reads RC. Asp-601 contacts L-homocysteine. Asp-601 provides a ligand contact to L-methionine. Glu-607 serves as a coordination point for 5-methyltetrahydropteroyltri-L-glutamate. Zn(2+) contacts are provided by His-643, Cys-645, and Glu-667. His-696 serves as the catalytic Proton donor. Cys-728 serves as a coordination point for Zn(2+).

This sequence belongs to the vitamin-B12 independent methionine synthase family. The cofactor is Zn(2+).

The enzyme catalyses 5-methyltetrahydropteroyltri-L-glutamate + L-homocysteine = tetrahydropteroyltri-L-glutamate + L-methionine. The protein operates within amino-acid biosynthesis; L-methionine biosynthesis via de novo pathway; L-methionine from L-homocysteine (MetE route): step 1/1. Its function is as follows. Catalyzes the transfer of a methyl group from 5-methyltetrahydrofolate to homocysteine resulting in methionine formation. This chain is 5-methyltetrahydropteroyltriglutamate--homocysteine methyltransferase, found in Neisseria gonorrhoeae (strain ATCC 700825 / FA 1090).